We begin with the raw amino-acid sequence, 1069 residues long: Leucine--tRNA ligase (1069 aa).

A disordered region spans residues 19-53 (TAEHGTGAANATASPSGAVPPSGATATAGTGDEPG). Positions 107-118 (PYPSGTGLHVGH) match the 'HIGH' region motif. Positions 823 to 836 (GRFTHHGAPVDRRS) are enriched in basic and acidic residues. The interval 823–846 (GRFTHHGAPVDRRSGKMGKSLKNS) is disordered. The short motif at 838–842 (KMGKS) is the 'KMSKS' region element. An ATP-binding site is contributed by lysine 841.

Belongs to the class-I aminoacyl-tRNA synthetase family.

It is found in the cytoplasm. It catalyses the reaction tRNA(Leu) + L-leucine + ATP = L-leucyl-tRNA(Leu) + AMP + diphosphate. The polypeptide is Leucine--tRNA ligase (Frankia alni (strain DSM 45986 / CECT 9034 / ACN14a)).